A 180-amino-acid polypeptide reads, in one-letter code: Large ribosomal subunit protein uL5 (180 aa).

Belongs to the universal ribosomal protein uL5 family. In terms of assembly, part of the 50S ribosomal subunit; part of the 5S rRNA/L5/L18/L25 subcomplex. Contacts the 5S rRNA and the P site tRNA. Forms a bridge to the 30S subunit in the 70S ribosome.

This is one of the proteins that bind and probably mediate the attachment of the 5S RNA into the large ribosomal subunit, where it forms part of the central protuberance. In the 70S ribosome it contacts protein S13 of the 30S subunit (bridge B1b), connecting the 2 subunits; this bridge is implicated in subunit movement. Contacts the P site tRNA; the 5S rRNA and some of its associated proteins might help stabilize positioning of ribosome-bound tRNAs. This Acholeplasma laidlawii (strain PG-8A) protein is Large ribosomal subunit protein uL5.